The sequence spans 421 residues: Protein HOMOLOG OF MAMMALIAN LYST-INTERACTING PROTEIN 5 (421 aa).

Serine 2 carries the post-translational modification N-acetylserine. A disordered region spans residues 146–374 (IKEGRKPTPG…KYHYDSSYQP (229 aa)). A compositionally biased stretch (polar residues) spans 165 to 185 (SIPSSGPSGSYDHSASDTNTT). Positions 188 to 207 (HRTELDPPHDSNDDSSHHQF) are enriched in basic and acidic residues. Residues 245 to 258 (LPPPTGPSDSPYPH) are compositionally biased toward pro residues. Residues 278-293 (NYSSHEPSPNSLPNFQ) are compositionally biased toward polar residues. 2 stretches are compositionally biased toward low complexity: residues 294 to 308 (SYPSFSESSLPSTSP) and 317 to 337 (PEPYYSSPHSAPAPSSTSFSS).

It belongs to the VTA1 family. In terms of assembly, homodimer. Interacts with SKD1/VPS4, VPS60-1, CHMP1A and CHMP1B. Binds to PROS/At4g24370. Interacts with MPK6 and MPK3. Post-translationally, phosphorylated by activated MPK6 and MPK3, this activation is required to trigger multivesicular bodies (MVBs) trafficking upon plant infection.

The protein resides in the cytoplasm. Its subcellular location is the endosome membrane. It is found in the nucleus. The protein localises to the endosome. It localises to the multivesicular body. Involved in the endosomal multivesicular bodies (MVB) pathway. MVBs contain intraluminal vesicles (ILVs) that are generated by invagination and scission from the limiting membrane of the endosome and are delivered to lysosomes enabling degradation of membrane proteins. Thought to be a cofactor of SKD1/VPS4, which catalyzes the disassembly of membrane-associated ESCRT-III. Target of pathogen-responsive mitogen-activated protein kinases (MPKs) that plays a critical role in plant basal resistance to Pseudomonas syringae in a SKD1-dependent manner by promoting multivesicular bodies (MVBs) trafficking upon plant infection. The polypeptide is Protein HOMOLOG OF MAMMALIAN LYST-INTERACTING PROTEIN 5 (Arabidopsis thaliana (Mouse-ear cress)).